Here is an 84-residue protein sequence, read N- to C-terminus: Large ribosomal subunit protein bL27 (84 aa).

Positions 1–20 are disordered; that stretch reads MAHKKGGGSTKNGRDSNPKY.

The protein belongs to the bacterial ribosomal protein bL27 family.

The chain is Large ribosomal subunit protein bL27 (rpmA) from Prosthecochloris vibrioformis (Chlorobium vibrioforme).